The following is a 208-amino-acid chain: Peptidyl-tRNA hydrolase (208 aa).

A tRNA-binding site is contributed by Y19. Catalysis depends on H24, which acts as the Proton acceptor. F71, N73, and N119 together coordinate tRNA.

Belongs to the PTH family. Monomer.

Its subcellular location is the cytoplasm. It catalyses the reaction an N-acyl-L-alpha-aminoacyl-tRNA + H2O = an N-acyl-L-amino acid + a tRNA + H(+). Hydrolyzes ribosome-free peptidyl-tRNAs (with 1 or more amino acids incorporated), which drop off the ribosome during protein synthesis, or as a result of ribosome stalling. Its function is as follows. Catalyzes the release of premature peptidyl moieties from peptidyl-tRNA molecules trapped in stalled 50S ribosomal subunits, and thus maintains levels of free tRNAs and 50S ribosomes. This is Peptidyl-tRNA hydrolase from Synechococcus elongatus (strain ATCC 33912 / PCC 7942 / FACHB-805) (Anacystis nidulans R2).